Consider the following 228-residue polypeptide: MSTWANLGLQDSASPLMEQLIFFHDHALLILVMITVLVGYLMFMLFFNNYVNRFLLHGQLIEMIWTILPAIILLFIALPSLRLLYLLDEINEPSVTLKSIGHQWYWSYEYSDFNNIEFDSYMIPTNELMTDGFRLLDVDNRVVLPMNSQIRILVTAADVIHSWTVPALGVKVDGTPGRLNQTNFFINRPGLFYGQCSEICGANHSFMPIVIESVPVNYFIKWISSNNS.

The Mitochondrial intermembrane portion of the chain corresponds to 1–26 (MSTWANLGLQDSASPLMEQLIFFHDH). A helical transmembrane segment spans residues 27-48 (ALLILVMITVLVGYLMFMLFFN). Residues 49-62 (NYVNRFLLHGQLIE) lie on the Mitochondrial matrix side of the membrane. Residues 63–82 (MIWTILPAIILLFIALPSLR) traverse the membrane as a helical segment. The Mitochondrial intermembrane segment spans residues 83–228 (LLYLLDEINE…FIKWISSNNS (146 aa)). 6 residues coordinate Cu cation: His-161, Cys-196, Glu-198, Cys-200, His-204, and Met-207. Glu-198 is a binding site for Mg(2+).

This sequence belongs to the cytochrome c oxidase subunit 2 family. As to quaternary structure, component of the cytochrome c oxidase (complex IV, CIV), a multisubunit enzyme composed of a catalytic core of 3 subunits and several supernumerary subunits. The complex exists as a monomer or a dimer and forms supercomplexes (SCs) in the inner mitochondrial membrane with ubiquinol-cytochrome c oxidoreductase (cytochrome b-c1 complex, complex III, CIII). It depends on Cu cation as a cofactor.

It is found in the mitochondrion inner membrane. It catalyses the reaction 4 Fe(II)-[cytochrome c] + O2 + 8 H(+)(in) = 4 Fe(III)-[cytochrome c] + 2 H2O + 4 H(+)(out). Component of the cytochrome c oxidase, the last enzyme in the mitochondrial electron transport chain which drives oxidative phosphorylation. The respiratory chain contains 3 multisubunit complexes succinate dehydrogenase (complex II, CII), ubiquinol-cytochrome c oxidoreductase (cytochrome b-c1 complex, complex III, CIII) and cytochrome c oxidase (complex IV, CIV), that cooperate to transfer electrons derived from NADH and succinate to molecular oxygen, creating an electrochemical gradient over the inner membrane that drives transmembrane transport and the ATP synthase. Cytochrome c oxidase is the component of the respiratory chain that catalyzes the reduction of oxygen to water. Electrons originating from reduced cytochrome c in the intermembrane space (IMS) are transferred via the dinuclear copper A center (CU(A)) of subunit 2 and heme A of subunit 1 to the active site in subunit 1, a binuclear center (BNC) formed by heme A3 and copper B (CU(B)). The BNC reduces molecular oxygen to 2 water molecules using 4 electrons from cytochrome c in the IMS and 4 protons from the mitochondrial matrix. The chain is Cytochrome c oxidase subunit 2 (mt:CoII) from Drosophila melanogaster (Fruit fly).